The sequence spans 790 residues: Kinesin-like protein KIF9 (790 aa).

One can recognise a Kinesin motor domain in the interval 6-340 (KVHAFVRVKP…LRFASRMKLV (335 aa)). Residues 12 to 14 (RVK) and 93 to 100 (GQTGAGKT) each bind ATP. Residues 342–380 (TEPAINEKYDAERMVKNLEKELALLKQELAIHDSLTNRT) are a coiled coil. The segment at 477–578 (QNFGLGVAPF…IRPDTPPSKP (102 aa)) is disordered. The span at 525–534 (VSTSKTQLVP) shows a compositional bias: polar residues. At Thr-530 the chain carries Phosphothreonine. 2 stretches are compositionally biased toward basic and acidic residues: residues 537 to 552 (KDGD…RETS) and 561 to 570 (SPKEELRPIR). Ser-546 carries the phosphoserine modification. Residues 658 to 690 (LLILKLKDLKKQYRSEYQDLRDLRAEIQYCQHL) are a coiled coil.

It belongs to the TRAFAC class myosin-kinesin ATPase superfamily. Kinesin family. In terms of assembly, interacts with HYDIN.

It is found in the cytoplasm. The protein localises to the cytoskeleton. Its subcellular location is the cell projection. It localises to the cilium. The protein resides in the flagellum. It is found in the flagellum axoneme. Essential for normal male fertility and for progressive motility of spermatozoa. This is Kinesin-like protein KIF9 (KIF9) from Homo sapiens (Human).